We begin with the raw amino-acid sequence, 369 residues long: Probable trehalose-phosphate phosphatase D (369 aa).

Residues 63 to 85 (RASSPTRTRPGNISPLPESDEED) are disordered.

It belongs to the trehalose phosphatase family. Requires a divalent metal cation as cofactor.

The enzyme catalyses alpha,alpha-trehalose 6-phosphate + H2O = alpha,alpha-trehalose + phosphate. It functions in the pathway glycan biosynthesis; trehalose biosynthesis. Its function is as follows. Removes the phosphate from trehalose 6-phosphate to produce free trehalose. Trehalose accumulation in plant may improve abiotic stress tolerance. This Arabidopsis thaliana (Mouse-ear cress) protein is Probable trehalose-phosphate phosphatase D (TPPD).